The following is a 253-amino-acid chain: Phosphate import ATP-binding protein PstB (253 aa).

The 242-residue stretch at 7–248 (IKVRDLNLYY…PRDRRTEDYI (242 aa)) folds into the ABC transporter domain. 39–46 (GPSGCGKS) serves as a coordination point for ATP.

This sequence belongs to the ABC transporter superfamily. Phosphate importer (TC 3.A.1.7) family. As to quaternary structure, the complex is composed of two ATP-binding proteins (PstB), two transmembrane proteins (PstC and PstA) and a solute-binding protein (PstS).

It is found in the cell membrane. It catalyses the reaction phosphate(out) + ATP + H2O = ADP + 2 phosphate(in) + H(+). In terms of biological role, part of the ABC transporter complex PstSACB involved in phosphate import. Responsible for energy coupling to the transport system. The chain is Phosphate import ATP-binding protein PstB from Carboxydothermus hydrogenoformans (strain ATCC BAA-161 / DSM 6008 / Z-2901).